The chain runs to 1430 residues: MSRPSSVSPRQPAPGGGGGGGPSPCGPGGGGRAKGLKDIRIDEEVKIAVNIALERFRYGDQREMEFPSSLTSTERAFIHRLSQSLGLVSKSKGKGANRYLTVKKKDGSETAHAMMTCNLTHNTKHAVRSLIQRFPVTNKERTELLPKTERGNVFAVEAENREMSKTSGRLNNGIPQIPVKRGESEFDSFRQSLPVFEKQEEIVKIIKENKVVLIVGETGSGKTTQIPQFLLDDCFKNGIPCRIFCTQPRRLAAIAVAERVAAERRERIGQTIGYQIRLESRVSPKTLLTFCTNGVLLRTLMAGDSTLSTVTHVIVDEVHERDRFSDFLLTKLRDLLQKHPTLKLILSSAALDVNLFIRYFGSCPVIYIQGRPFEVKEMFLEDILRTTGYTNKEMLKYKKEKQQEEKQQTTLTEWYSAQENSFKPGSQRQRTVLNVTDEYDLLDDGGDAVFSQLTEKDVNCLEPWLVKEMDACLSDIWLHKDIDAFAQVFHLILTENVSVDYRHSETSATALMVAAGRGFASQVEQLISMGANVHSKASNGWMALDWAKHFGQTEIVDLLESYSASLEFGNLDESSLVQTNGSDLSAEDRELLKAYHHSFDDEKVDLDLIMHLLYNICHSCDAGAVLIFLPGYDEIVGLRDRILFDDKRFADNTHRYQVFMLHSNMQTSDQKKVLKNPPAGVRKIILSTNIAETSITVNDVVFVIDSGKVKEKSFDALNFVTMLKMVWISKASAIQRKGRAGRCRPGICFRLFSRLRFQNMLEFQTPELLRMPLQELCLHTKLLAPVNCPVADFLMKAPEPPPALIVRNAVQMLKTIDAMDTWEDLTELGYHLADLPVEPHLGKMVLCAVVLKCLDPILTIACTLAYRDPFVLPTQASQKRAAMLCRKRFTAGAFSDHMALLRAFQAWQKARSDGWERAFCEKNFLSQATMEIIIGMRTQLLGQLRASGFVRARGGGDIRDVNTNSENWAVVKAALVAGMYPNLVHVDRENLVLTGPKEKKVRFHPASVLSQPQYKKIPPANGQAAAIKALPTDWLIYDEMTRAHRIANIRCCSAVTPVTILVFCGPARLASNALQEPSSFRVDGIPNDSSDSEMEDKTTANLAALKLDEWLHFKLEPEAASLLLQLRQKWHSLFLRRMRAPSKPWSQVDEATIRAIIAVLSTEEQSAGLQQPSGIGQRPRPMSSEELPLASSWRSNNSRKSSADTEFSDECTTAERVLMKSPSPALHPPQKYKDRGILHPKRGTEDRSDQSSVKSTDSSSYPSPCASPSPPSSGKGSKSPSPRPNMPVRYFIMKSSNLRNLEISQQKGIWSTTPSNERKLNRAFWESSMVYLVFSVQGSGHFQGFSRMSSEIGREKSQDWGSAGLGGVFKVEWIRKESLPFQFAHHLLNPWNDNKKVQISRDGQELEPQVGEQLLQLWERLPLGEKNTTD.

The segment at 1–37 (MSRPSSVSPRQPAPGGGGGGGPSPCGPGGGGRAKGLK) is disordered. A compositionally biased stretch (gly residues) spans 14–33 (PGGGGGGGPSPCGPGGGGRA). The 69-residue stretch at 38-106 (DIRIDEEVKI…NRYLTVKKKD (69 aa)) folds into the R3H domain. The region spanning 203 to 369 (VKIIKENKVV…FGSCPVIYIQ (167 aa)) is the Helicase ATP-binding domain. 216–223 (GETGSGKT) provides a ligand contact to ATP. Positions 316-319 (DEVH) match the DEAH box motif. 2 ANK repeats span residues 506 to 538 (TSAT…SKAS) and 539 to 571 (NGWM…FGNL). The region spanning 612–784 (LLYNICHSCD…ELCLHTKLLA (173 aa)) is the Helicase C-terminal domain. 3 positions are modified to phosphoserine: Ser1089, Ser1090, and Ser1092. Residues 1164–1174 (EQSAGLQQPSG) show a composition bias toward polar residues. The segment at 1164–1288 (EQSAGLQQPS…SPSPRPNMPV (125 aa)) is disordered. The segment covering 1191 to 1200 (SSWRSNNSRK) has biased composition (low complexity). Ser1202 is modified (phosphoserine). Over residues 1231-1249 (KYKDRGILHPKRGTEDRSD) the composition is skewed to basic and acidic residues. Residues 1250 to 1264 (QSSVKSTDSSSYPSP) show a composition bias toward low complexity. Phosphoserine is present on residues Ser1263, Ser1267, and Ser1281. The YTH domain occupies 1288–1418 (VRYFIMKSSN…QVGEQLLQLW (131 aa)). Residues 1294 to 1296 (KSS), Trp1310, and Trp1360 each bind RNA.

This sequence belongs to the DEAD box helicase family. DEAH subfamily. In terms of assembly, interacts with MEIOC; binds transcripts that regulate the mitotic cell cycle inhibiting progression into metaphase, thereby allowing meiotic prophase to proceed normally. Interacts (via ANK repeats) with XRN1. Interacts with ZCCHC4. Associates with the small ribosomal subunit. Interacts with RBM46.

It is found in the cytoplasm. It localises to the perinuclear region. It carries out the reaction ATP + H2O = ADP + phosphate + H(+). In terms of biological role, 3'-5' RNA helicase that plays a key role in the male and female germline by promoting transition from mitotic to meiotic divisions in stem cells. Specifically recognizes and binds N6-methyladenosine (m6A)-containing RNAs, a modification present at internal sites of mRNAs and some non-coding RNAs that plays a role in the efficiency of RNA processing and stability. Essential for ensuring a successful progression of the meiotic program in the germline by regulating the level of m6A-containing RNAs. Acts by binding and promoting degradation of m6A-containing mRNAs: the 3'-5' RNA helicase activity is required for this process and RNA degradation may be mediated by XRN1 exoribonuclease. Required for both spermatogenesis and oogenesis. The polypeptide is 3'-5' RNA helicase YTHDC2 (Pongo abelii (Sumatran orangutan)).